A 161-amino-acid chain; its full sequence is uncharacterized protein (161 aa).

Residues 126-161 form a disordered region; that stretch reads TPSNCGESSTSSGQSSGDESNCSLRTHGVYTRGEQH. Residues 128–148 are compositionally biased toward low complexity; it reads SNCGESSTSSGQSSGDESNCS.

Belongs to the herpesviridae US1 family.

This is an uncharacterized protein from Human cytomegalovirus (strain AD169) (HHV-5).